The following is a 273-amino-acid chain: MAIVKCKPTSPGRRHVVKVVNPELHKGKPYAPLLETLSKSGGRNNNGRITTRHIGGGHKQHYRLIDFKRNKDGIPAVVERLEYDPNRSANIALVLYKDGERRYILAPKGLKAGEQIQSGVDAAIKAGNALPMRNIPVGSTVHNVEMKPGKGGQLARSAGAYVQIVARDGAYVTLRLRSGEMRKIQSECRATLGEVGNAEHMLRVLGKAGASRWRGIRPTVRGTAMNPVDHPHGGGEGRNFGKHPVTPWGIQTKGKKTRSNKRTDKFIVRRRSK.

The segment at 221–273 is disordered; sequence RGTAMNPVDHPHGGGEGRNFGKHPVTPWGIQTKGKKTRSNKRTDKFIVRRRSK.

The protein belongs to the universal ribosomal protein uL2 family. In terms of assembly, part of the 50S ribosomal subunit. Forms a bridge to the 30S subunit in the 70S ribosome.

Functionally, one of the primary rRNA binding proteins. Required for association of the 30S and 50S subunits to form the 70S ribosome, for tRNA binding and peptide bond formation. It has been suggested to have peptidyltransferase activity; this is somewhat controversial. Makes several contacts with the 16S rRNA in the 70S ribosome. This chain is Large ribosomal subunit protein uL2, found in Sodalis glossinidius (strain morsitans).